A 103-amino-acid chain; its full sequence is Probable protease inhibitor Egf0.4b (103 aa).

Positions 1-22 (MMSEKFALVLLVACIAFIGIET) are cleaved as a signal peptide. Residues 35-87 (CGENEAYDSMRRGCEERCDDHNPTFCFKFTTVCWCEKGYVRDKSDTCIKVEDC) form the TIL domain.

It belongs to the polydnaviridae EGF-like motif protein family.

This is Probable protease inhibitor Egf0.4b (O11) from Microplitis demolitor bracovirus (isolate Webb) (MdBV).